Reading from the N-terminus, the 330-residue chain is Delta-aminolevulinic acid dehydratase (330 aa).

Residues Cys122, Cys124, His131, and Cys132 each coordinate Zn(2+). The active-site Schiff-base intermediate with substrate is the Lys199. The residue at position 199 (Lys199) is an N6-succinyllysine. A 5-aminolevulinate-binding site is contributed by Arg209. At Ser215 the chain carries Phosphoserine. A 5-aminolevulinate-binding site is contributed by Arg221. Cys223 contacts Zn(2+). The active-site Schiff-base intermediate with substrate is Lys252. Lys252 is subject to N6-succinyllysine. 2 residues coordinate 5-aminolevulinate: Ser279 and Tyr318.

This sequence belongs to the ALAD family. Homooctamer; active form. Homohexamer; low activity form. Zn(2+) serves as cofactor.

It localises to the cytoplasm. The protein resides in the cytosol. The catalysed reaction is 2 5-aminolevulinate = porphobilinogen + 2 H2O + H(+). The protein operates within porphyrin-containing compound metabolism; protoporphyrin-IX biosynthesis; coproporphyrinogen-III from 5-aminolevulinate: step 1/4. Can alternate between a fully active homooctamer and a low-activity homohexamer. A bound magnesium ion may promote the assembly of the fully active homooctamer. The magnesium-binding site is absent in the low-activity homohexamer. Inhibited by compounds that favor the hexameric state. Inhibited by divalent lead ions. The lead ions partially displace the zinc cofactor. Its function is as follows. Catalyzes an early step in the biosynthesis of tetrapyrroles. Binds two molecules of 5-aminolevulinate per subunit, each at a distinct site, and catalyzes their condensation to form porphobilinogen. The sequence is that of Delta-aminolevulinic acid dehydratase (ALAD) from Macaca fascicularis (Crab-eating macaque).